Consider the following 369-residue polypeptide: MKSGRFIGVMSGTSLDGVDVVLATIDEHRVAQLASLSWPIPVSLKQAVLDICQGQQLTLSQFGQLDTQLGRLFADAVNALLKEQNLQARDIVAIGCHGQTVWHEPTGVAPHTLQIGDNNQIVARTGITVVGDFRRRDIALGGQGAPLVPAFHHALLAHPTERRMVLNIGGIANLSLLIPGQLVGGYDTGPGNMLMDAWIWRQAGKPYDKDAEWARAGKVILPLLQNMLSDPYFSQPAPKSTGREYFNYGWLERHLRHFPGVDPRDVQATLAELTAVTISEQVLLSGGCERLMVCGGGSRNLLLMARLAALLPGTEVTTTDAVGISGDDMEALAFAWLAWRTLAGLPGNLPSVTGASQETVLGAIFPANP.

An ATP-binding site is contributed by 12–19 (GTSLDGVD).

Belongs to the anhydro-N-acetylmuramic acid kinase family.

It carries out the reaction 1,6-anhydro-N-acetyl-beta-muramate + ATP + H2O = N-acetyl-D-muramate 6-phosphate + ADP + H(+). It functions in the pathway amino-sugar metabolism; 1,6-anhydro-N-acetylmuramate degradation. The protein operates within cell wall biogenesis; peptidoglycan recycling. In terms of biological role, catalyzes the specific phosphorylation of 1,6-anhydro-N-acetylmuramic acid (anhMurNAc) with the simultaneous cleavage of the 1,6-anhydro ring, generating MurNAc-6-P. Is required for the utilization of anhMurNAc either imported from the medium or derived from its own cell wall murein, and thus plays a role in cell wall recycling. The polypeptide is Anhydro-N-acetylmuramic acid kinase (Shigella boydii serotype 4 (strain Sb227)).